Here is a 443-residue protein sequence, read N- to C-terminus: Chromosomal replication initiator protein DnaA (443 aa).

The interval 1 to 80 (MTSQFASLWQ…LGESVEVRFF (80 aa)) is domain I, interacts with DnaA modulators. The domain II stretch occupies residues 80-104 (FTPSADSRRSEPSRRPVATEESSPP). Positions 83-105 (SADSRRSEPSRRPVATEESSPPL) are disordered. The span at 85 to 97 (DSRRSEPSRRPVA) shows a compositional bias: basic and acidic residues. The tract at residues 105–321 (LLNPKYTFDT…GALNRVIAYA (217 aa)) is domain III, AAA+ region. ATP-binding residues include Gly149, Gly151, Lys152, and Thr153. Positions 322–443 (NLSGKSLTSE…QVLKEKIQRA (122 aa)) are domain IV, binds dsDNA.

Belongs to the DnaA family. In terms of assembly, oligomerizes as a right-handed, spiral filament on DNA at oriC.

It localises to the cytoplasm. Its function is as follows. Plays an essential role in the initiation and regulation of chromosomal replication. ATP-DnaA binds to the origin of replication (oriC) to initiate formation of the DNA replication initiation complex once per cell cycle. Binds the DnaA box (a 9 base pair repeat at the origin) and separates the double-stranded (ds)DNA. Forms a right-handed helical filament on oriC DNA; dsDNA binds to the exterior of the filament while single-stranded (ss)DNA is stabiized in the filament's interior. The ATP-DnaA-oriC complex binds and stabilizes one strand of the AT-rich DNA unwinding element (DUE), permitting loading of DNA polymerase. After initiation quickly degrades to an ADP-DnaA complex that is not apt for DNA replication. Binds acidic phospholipids. The protein is Chromosomal replication initiator protein DnaA of Heliobacterium modesticaldum (strain ATCC 51547 / Ice1).